Here is a 152-residue protein sequence, read N- to C-terminus: Xanthine-guanine phosphoribosyltransferase (152 aa).

Residues 37 to 38 (RG), arginine 69, and 88 to 96 (DDLVDTGGT) each bind 5-phospho-alpha-D-ribose 1-diphosphate. A GMP-binding site is contributed by arginine 69. Residue aspartate 89 coordinates Mg(2+). Guanine contacts are provided by aspartate 92 and isoleucine 135. 2 residues coordinate xanthine: aspartate 92 and isoleucine 135. Residues 92–96 (DTGGT) and 134–135 (WI) contribute to the GMP site.

The protein belongs to the purine/pyrimidine phosphoribosyltransferase family. XGPT subfamily. As to quaternary structure, homotetramer. Requires Mg(2+) as cofactor.

It is found in the cell inner membrane. The enzyme catalyses GMP + diphosphate = guanine + 5-phospho-alpha-D-ribose 1-diphosphate. The catalysed reaction is XMP + diphosphate = xanthine + 5-phospho-alpha-D-ribose 1-diphosphate. It carries out the reaction IMP + diphosphate = hypoxanthine + 5-phospho-alpha-D-ribose 1-diphosphate. Its pathway is purine metabolism; GMP biosynthesis via salvage pathway; GMP from guanine: step 1/1. It participates in purine metabolism; XMP biosynthesis via salvage pathway; XMP from xanthine: step 1/1. In terms of biological role, purine salvage pathway enzyme that catalyzes the transfer of the ribosyl-5-phosphate group from 5-phospho-alpha-D-ribose 1-diphosphate (PRPP) to the N9 position of the 6-oxopurines guanine and xanthine to form the corresponding ribonucleotides GMP (guanosine 5'-monophosphate) and XMP (xanthosine 5'-monophosphate), with the release of PPi. To a lesser extent, also acts on hypoxanthine. This Pectobacterium atrosepticum (strain SCRI 1043 / ATCC BAA-672) (Erwinia carotovora subsp. atroseptica) protein is Xanthine-guanine phosphoribosyltransferase.